The sequence spans 629 residues: (-)-alpha pinene synthase 1, chloroplastic (629 aa).

The N-terminal 48 residues, 1–48 (MSPVSVISLPSDLCLPTSFIDRSGRELNPLHITIPNVAMRRQGKLMTR), are a transit peptide targeting the chloroplast. Mg(2+)-binding residues include Asp380, Asp384, and Asp532. Positions 380–384 (DDMYD) match the DDXXD motif motif.

It belongs to the terpene synthase family. Tpsd subfamily. It depends on Mg(2+) as a cofactor. Requires Mn(2+) as cofactor.

It is found in the plastid. The protein localises to the chloroplast. It carries out the reaction (2E)-geranyl diphosphate = (1S,5S)-alpha-pinene + diphosphate. It catalyses the reaction (2E)-geranyl diphosphate = (1S,5S)-beta-pinene + diphosphate. Its pathway is terpene metabolism; oleoresin biosynthesis. It participates in secondary metabolite biosynthesis; terpenoid biosynthesis. Functionally, monoterpene synthase (TPS) involved in the biosynthesis of monoterpene natural products included in conifer oleoresin secretions and volatile emissions; these compounds contribute to biotic and abiotic stress defense against herbivores and pathogens. Catalyzes the conversion of (2E)-geranyl diphosphate (GPP) to (-)-alpha-pinene and, to a lower extent, to (-)-beta-pinene. This is (-)-alpha pinene synthase 1, chloroplastic from Pinus contorta (Shore pine).